The sequence spans 604 residues: Elongation factor 4 (604 aa).

The tr-type G domain maps to 7–190 (SRLRNFCIIA…IVDRVPAPPD (184 aa)). Residues 19 to 24 (DHGKST) and 136 to 139 (NKID) each bind GTP.

This sequence belongs to the TRAFAC class translation factor GTPase superfamily. Classic translation factor GTPase family. LepA subfamily.

The protein localises to the cell inner membrane. It carries out the reaction GTP + H2O = GDP + phosphate + H(+). Required for accurate and efficient protein synthesis under certain stress conditions. May act as a fidelity factor of the translation reaction, by catalyzing a one-codon backward translocation of tRNAs on improperly translocated ribosomes. Back-translocation proceeds from a post-translocation (POST) complex to a pre-translocation (PRE) complex, thus giving elongation factor G a second chance to translocate the tRNAs correctly. Binds to ribosomes in a GTP-dependent manner. This Synechococcus sp. (strain RCC307) protein is Elongation factor 4.